The following is a 318-amino-acid chain: NADH-ubiquinone oxidoreductase chain 1 (318 aa).

Transmembrane regions (helical) follow at residues Phe-2–Leu-22, Ile-68–Pro-88, Ile-102–Ala-122, Leu-146–Ile-166, Phe-171–Ala-191, Ala-217–Leu-237, Glu-253–Ile-273, and Leu-294–Ile-314.

Belongs to the complex I subunit 1 family.

The protein localises to the mitochondrion inner membrane. The catalysed reaction is a ubiquinone + NADH + 5 H(+)(in) = a ubiquinol + NAD(+) + 4 H(+)(out). In terms of biological role, core subunit of the mitochondrial membrane respiratory chain NADH dehydrogenase (Complex I) that is believed to belong to the minimal assembly required for catalysis. Complex I functions in the transfer of electrons from NADH to the respiratory chain. The immediate electron acceptor for the enzyme is believed to be ubiquinone. In Tamias sibiricus (Siberian chipmunk), this protein is NADH-ubiquinone oxidoreductase chain 1 (MT-ND1).